Reading from the N-terminus, the 377-residue chain is Protein RecA (377 aa).

Gly76–Thr83 contributes to the ATP binding site. A disordered region spans residues Thr346–His377.

Belongs to the RecA family.

It localises to the cytoplasm. In terms of biological role, can catalyze the hydrolysis of ATP in the presence of single-stranded DNA, the ATP-dependent uptake of single-stranded DNA by duplex DNA, and the ATP-dependent hybridization of homologous single-stranded DNAs. It interacts with LexA causing its activation and leading to its autocatalytic cleavage. The chain is Protein RecA from Bdellovibrio bacteriovorus (strain ATCC 15356 / DSM 50701 / NCIMB 9529 / HD100).